Reading from the N-terminus, the 144-residue chain is Snake venom vascular endothelial growth factor toxin VR-1 (144 aa).

Positions 1-24 (MAAYLLAVAILFCIQGWPSGTVQG) are cleaved as a signal peptide. Glutamine 25 is subject to Pyrrolidone carboxylic acid. 3 disulfides stabilise this stretch: cysteine 38-cysteine 80, cysteine 69-cysteine 115, and cysteine 73-cysteine 117. Residues 120 to 134 (RWKQGEPEGPKEPRR) show a composition bias toward basic and acidic residues. The segment at 120-144 (RWKQGEPEGPKEPRRGGVRAKFPFD) is disordered. A propeptide spanning residues 134-144 (RGGVRAKFPFD) is cleaved from the precursor.

The protein belongs to the PDGF/VEGF growth factor family. Snake venom VEGF subfamily. As to quaternary structure, homodimer; disulfide-linked. Interacts with VEGF receptor-2 (KDR) with high affinity, but not with VEGF receptor-1 (Flt-1), VEGF receptor-3 (FLT4), and neuropilin-1 (NRP1). As to expression, expressed by the venom gland.

Its subcellular location is the secreted. In terms of biological role, snake venom VEGFs may contribute to venom dispersion and prey subjugation by inducing vascular permeability and hypotension. This protein induces angiogenesis probably through VEGF receptor (KDR/VEGFR-2) signaling, as well as drastic hypotension. The hypotension is mediated by nitric oxide, which is produced by VEGF-activated endothelium NO synthase. May also induce vascular permeability. This is Snake venom vascular endothelial growth factor toxin VR-1 from Daboia russelii (Russel's viper).